The chain runs to 628 residues: LRR receptor kinase SERK2 (628 aa).

The signal sequence occupies residues 1 to 31 (MAEARLLRRRRLCLAVPFVWVVAVAVSRVGA). LRR repeat units lie at residues 97–121 (LKNL…LGNL), 123–144 (NLVS…TLGQ), 145–169 (LYKL…LTNI), and 170–194 (TTLQ…SFSL). N109, N120, N133, N155, N168, and N181 each carry an N-linked (GlcNAc...) asparagine glycan. The chain crosses the membrane as a helical span at residues 243 to 263 (AIAGGVAAAAALLFAVPAIGF). T303 carries the post-translational modification Phosphothreonine. The Protein kinase domain occupies 306–593 (FSNKNILGRG…GLAERWEEWQ (288 aa)). Position 312-320 (312-320 (LGRGGFGKV)) interacts with ATP. S329 is subject to Phosphoserine. K334 is a binding site for ATP. T350 carries the post-translational modification Phosphothreonine. S356 and S387 each carry phosphoserine. D433 (proton acceptor) is an active-site residue. Residues T463, T466, and T472 each carry the phosphothreonine modification. Phosphoserine is present on S615. A Phosphothreonine modification is found at T616. The residue at position 625 (S625) is a Phosphoserine.

It belongs to the protein kinase superfamily. Ser/Thr protein kinase family. Interacts with BRI1. Interacts with XA21, XA26/XA3 and FLS2. In terms of processing, autophosphorylated on serine and threonine residues. Expressed in flag leaves. Expressed in roots, shoot apex, leaf blades, leaf sheaths, panicles and flowers. Expressed leaves, stems, sheaths and flowers.

The protein localises to the cell membrane. The catalysed reaction is L-seryl-[protein] + ATP = O-phospho-L-seryl-[protein] + ADP + H(+). It catalyses the reaction L-threonyl-[protein] + ATP = O-phospho-L-threonyl-[protein] + ADP + H(+). LRR receptor kinase involved in positive regulation of somatic embryogenesis and defense response against the rice blast fungus pathogen Magnaporthe oryzae. Involved in the positive regulation of receptor kinase-mediated immunity. Required for immunity mediated by the LRR receptor kinases XA21 and XA26/XA3 which recognize effectors from the bacterial pathogen Xanthomonas oryzae pv. oryzae (Xoo). Required for the immune response mediated by the LRR receptor kinase FLS2 which recognizes specifically the bacterial flagellin (flg22) effector. Kinase activity and direct interaction with the immune receptors is critical for their function. Involved in the regulation of plant growth through the brassinosteroid (BR) signaling pathway. This is LRR receptor kinase SERK2 from Oryza sativa subsp. japonica (Rice).